Reading from the N-terminus, the 132-residue chain is Small ribosomal subunit protein uS8 (132 aa).

Belongs to the universal ribosomal protein uS8 family. Part of the 30S ribosomal subunit. Contacts proteins S5 and S12.

One of the primary rRNA binding proteins, it binds directly to 16S rRNA central domain where it helps coordinate assembly of the platform of the 30S subunit. The protein is Small ribosomal subunit protein uS8 of Geotalea daltonii (strain DSM 22248 / JCM 15807 / FRC-32) (Geobacter daltonii).